The following is a 35-amino-acid chain: Photosystem II reaction center protein M (35 aa).

The helical transmembrane segment at 7–27 (GLLATILVILVPSIFLVILYV) threads the bilayer.

Belongs to the PsbM family. In terms of assembly, PSII is composed of 1 copy each of membrane proteins PsbA, PsbB, PsbC, PsbD, PsbE, PsbF, PsbH, PsbI, PsbJ, PsbK, PsbL, PsbM, PsbT, PsbX, PsbY, PsbZ, Psb30/Ycf12, peripheral proteins PsbO, CyanoQ (PsbQ), PsbU, PsbV and a large number of cofactors. It forms dimeric complexes.

It is found in the cellular thylakoid membrane. Functionally, one of the components of the core complex of photosystem II (PSII). PSII is a light-driven water:plastoquinone oxidoreductase that uses light energy to abstract electrons from H(2)O, generating O(2) and a proton gradient subsequently used for ATP formation. It consists of a core antenna complex that captures photons, and an electron transfer chain that converts photonic excitation into a charge separation. This subunit is found at the monomer-monomer interface. The sequence is that of Photosystem II reaction center protein M from Synechococcus sp. (strain JA-3-3Ab) (Cyanobacteria bacterium Yellowstone A-Prime).